We begin with the raw amino-acid sequence, 156 residues long: Beta-defensin 125 (156 aa).

A signal peptide spans 1–20 (MNILMLTFIICGLLTRVTKG). Cystine bridges form between C27/C55, C35/C49, and C39/C56. Residues 68–156 (PAFPVIHLED…PPSQTALTHN (89 aa)) constitute a propeptide that is removed on maturation. The interval 108 to 156 (GETMTPETNTPETTMPPSEATTPETTMPPSETATSETMPPPSQTALTHN) is disordered. The span at 109 to 144 (ETMTPETNTPETTMPPSEATTPETTMPPSETATSET) shows a compositional bias: low complexity.

It belongs to the beta-defensin family.

It is found in the secreted. Functionally, has antibacterial activity. This Homo sapiens (Human) protein is Beta-defensin 125 (DEFB125).